A 407-amino-acid polypeptide reads, in one-letter code: Spore germination protein KC (407 aa).

The N-terminal stretch at Met1 to Gly20 is a signal peptide. Cys21 is lipidated: N-palmitoyl cysteine. Cys21 carries S-diacylglycerol cysteine lipidation.

The protein belongs to the GerABKC lipoprotein family.

It is found in the cell membrane. Functionally, involved in the germination response to the combination of glucose, fructose, L-asparagine, and KCl. The chain is Spore germination protein KC (gerKC) from Bacillus subtilis (strain 168).